Here is an 865-residue protein sequence, read N- to C-terminus: MKYDFKNVEKFYQDRWDFSIGKNNEQGKCYVLEMFPYPSGKIHMGHLRNYVIGDVIARYKRACGFEVLHPIGWDAFGLPAENAARDNNVNPAAWTKENIDNMRAQLKSIGLSYNWERELSTCEADYYKHEQKFFLDFLKQGLVYRKKSWVNWDPIDQTVLANEQVVDGKGWRSGAIVEKRELSQWFLKITDFAEDLLECLQGLENWPEKVKMMQDRWIGKSEGVTIEFKIVGLNKKLKVFTTCPHTLFGASFCAVAIEHPIVQDLMSKEIQDLISSIKIQGKNNEKVGIYTGLNVKHPFLDKELPLYVANFVLMEYREGAIFGCPAHDQRDFEFAQEYDLPIIPVISSARLGIIPACDQGSYTGSQCQATRMADGLNEEYTNNSIMFNSEFLNGLTVSEARKVIVEKLEEKGIGKKTINYRLHDWGVSRQRYWGCPIPVIYCKNCGTVPVPEEDLPVTLPTDVDFTSGGNPLDKHPTWKFVNCPKCKEQAERETDTFDTFFESSWYFAAFCSENKSIDKNACNRFMPVDYYIGGIEHAILHLLYSRFFCRALTKCGYFNVKEPFSTLITQGMVCHVTYKDKNGKWLFPEEAKRLITQGAKIQVGKVEKMSKSKKNTVDPNFIIEKYGADTARLFVLSDTPPEKDMEWSNDGVEGCSRYINKLWRMVMQFKPVVILNQSPVKQVADTEIQKEDMLSHAGMIPDKNVTGKFLGYRKKIHKLLHGLTDDLENCRLNCVVAKFREMTNLIAEIDVKTGKSLINEGICILIRVVEPFIPHLAESLWREIGGEGMLYLQPWPKAAKSLLIDDVVTVAVQINGKLRATIEVAINLHQEELKQIAINSVSNRVDQSKVRAVYAVSNKIVNIVT.

Residues proline 36–histidine 46 carry the 'HIGH' region motif. Positions lysine 608–serine 612 match the 'KMSKS' region motif. Lysine 611 lines the ATP pocket.

It belongs to the class-I aminoacyl-tRNA synthetase family.

It localises to the cytoplasm. It catalyses the reaction tRNA(Leu) + L-leucine + ATP = L-leucyl-tRNA(Leu) + AMP + diphosphate. The sequence is that of Leucine--tRNA ligase from Wolbachia sp. subsp. Brugia malayi (strain TRS).